The chain runs to 206 residues: Small ribosomal subunit protein uS4 (206 aa).

Residues 27 to 47 form a disordered region; it reads PSESKCNMNAAPGQHGGRRGR. An S4 RNA-binding domain is found at 96-158; the sequence is QRLDNVVYRM…SRKQIRIQSA (63 aa).

This sequence belongs to the universal ribosomal protein uS4 family. In terms of assembly, part of the 30S ribosomal subunit. Contacts protein S5. The interaction surface between S4 and S5 is involved in control of translational fidelity.

One of the primary rRNA binding proteins, it binds directly to 16S rRNA where it nucleates assembly of the body of the 30S subunit. Its function is as follows. With S5 and S12 plays an important role in translational accuracy. This Dichelobacter nodosus (strain VCS1703A) protein is Small ribosomal subunit protein uS4.